Reading from the N-terminus, the 423-residue chain is Gamma-glutamyl phosphate reductase (423 aa).

The protein belongs to the gamma-glutamyl phosphate reductase family.

The protein resides in the cytoplasm. It carries out the reaction L-glutamate 5-semialdehyde + phosphate + NADP(+) = L-glutamyl 5-phosphate + NADPH + H(+). Its pathway is amino-acid biosynthesis; L-proline biosynthesis; L-glutamate 5-semialdehyde from L-glutamate: step 2/2. Its function is as follows. Catalyzes the NADPH-dependent reduction of L-glutamate 5-phosphate into L-glutamate 5-semialdehyde and phosphate. The product spontaneously undergoes cyclization to form 1-pyrroline-5-carboxylate. The chain is Gamma-glutamyl phosphate reductase from Desulfovibrio desulfuricans (strain ATCC 27774 / DSM 6949 / MB).